Reading from the N-terminus, the 279-residue chain is Tryptophan 2,3-dioxygenase (279 aa).

Substrate-binding positions include 48-52, tyrosine 110, and arginine 114; that span reads FIIQH. Histidine 237 lines the heme pocket. Threonine 251 lines the substrate pocket.

Belongs to the tryptophan 2,3-dioxygenase family. In terms of assembly, homotetramer. It depends on heme as a cofactor.

The enzyme catalyses L-tryptophan + O2 = N-formyl-L-kynurenine. It functions in the pathway amino-acid degradation; L-tryptophan degradation via kynurenine pathway; L-kynurenine from L-tryptophan: step 1/2. Heme-dependent dioxygenase that catalyzes the oxidative cleavage of the L-tryptophan (L-Trp) pyrrole ring and converts L-tryptophan to N-formyl-L-kynurenine. Catalyzes the oxidative cleavage of the indole moiety. The polypeptide is Tryptophan 2,3-dioxygenase (Ruegeria sp. (strain TM1040) (Silicibacter sp.)).